A 201-amino-acid polypeptide reads, in one-letter code: Probable nicotinate-nucleotide adenylyltransferase (201 aa).

Belongs to the NadD family.

It carries out the reaction nicotinate beta-D-ribonucleotide + ATP + H(+) = deamido-NAD(+) + diphosphate. The protein operates within cofactor biosynthesis; NAD(+) biosynthesis; deamido-NAD(+) from nicotinate D-ribonucleotide: step 1/1. Functionally, catalyzes the reversible adenylation of nicotinate mononucleotide (NaMN) to nicotinic acid adenine dinucleotide (NaAD). This chain is Probable nicotinate-nucleotide adenylyltransferase, found in Clostridium botulinum (strain Kyoto / Type A2).